We begin with the raw amino-acid sequence, 429 residues long: Glucose-6-phosphate isomerase (429 aa).

Glu-282 acts as the Proton donor in catalysis. Catalysis depends on residues His-303 and Lys-418.

This sequence belongs to the GPI family.

The protein resides in the cytoplasm. The enzyme catalyses alpha-D-glucose 6-phosphate = beta-D-fructose 6-phosphate. It functions in the pathway carbohydrate biosynthesis; gluconeogenesis. Its pathway is carbohydrate degradation; glycolysis; D-glyceraldehyde 3-phosphate and glycerone phosphate from D-glucose: step 2/4. Catalyzes the reversible isomerization of glucose-6-phosphate to fructose-6-phosphate. The polypeptide is Glucose-6-phosphate isomerase (Mesomycoplasma hyopneumoniae (strain J / ATCC 25934 / NCTC 10110) (Mycoplasma hyopneumoniae)).